We begin with the raw amino-acid sequence, 495 residues long: Dipeptide and tripeptide permease A (495 aa).

Topologically, residues 1 to 20 are cytoplasmic; it reads MTTSALNPLRQPKPFYLIFS. The chain crosses the membrane as a helical span at residues 21–41; that stretch reads IEFWERFGFYGLQGILAVYLV. Over 42 to 51 the chain is Periplasmic; that stretch reads KALGLREADS. Residues 52-72 form a helical membrane-spanning segment; it reads FTLFSSFIALVYGLIAVGGWL. Residues 73 to 81 lie on the Cytoplasmic side of the membrane; sequence GDKVLGTKR. 2 helical membrane passes run 82–102 and 103–123; these read TILLGALVLTAGYAMVTASSE and HISLLYLGMGTIAVGNGLFKA. The Periplasmic portion of the chain corresponds to 124 to 145; that stretch reads NPSSLLSKCYEENDPRLDGAFT. Residues 146–166 form a helical membrane-spanning segment; sequence MYYMAINIGSLLSMLATPWLA. Topologically, residues 167–171 are cytoplasmic; that stretch reads DQFGY. Residues 172 to 192 form a helical membrane-spanning segment; it reads AHAFALSVVGMLITVANFILM. The Periplasmic segment spans residues 193–209; that stretch reads QGWVKNYGSDADFRTPR. Residues 210-230 traverse the membrane as a helical segment; that stretch reads LSTWLAVLAGVVAACAAAALL. At 231–232 the chain is on the cytoplasmic side; the sequence is LK. The helical transmembrane segment at 233–253 threads the bilayer; sequence HEIIANVVLAVLSIGVVGLYV. The Periplasmic segment spans residues 254 to 266; sequence KETLLLKGAERKK. Residues 267-287 traverse the membrane as a helical segment; that stretch reads MIVAAILMLQATVFFVLYNQM. At 288 to 312 the chain is on the cytoplasmic side; that stretch reads PLSLNFFAIHNTEHMLFGIPVQPEQ. Residues 313-333 form a helical membrane-spanning segment; that stretch reads FQSLNPFWIMLASPLLALCYN. The Periplasmic segment spans residues 334-344; it reads KLGNRLPMPHK. A helical transmembrane segment spans residues 345–365; sequence FAIGMVLCAGAFLVLPLGAKY. At 366 to 375 the chain is on the cytoplasmic side; sequence ANAQGLVSSN. Residues 376–396 traverse the membrane as a helical segment; sequence WMVLSYLLQSVGELLISGLGL. Residues 397-409 lie on the Periplasmic side of the membrane; it reads AMVAQLVPQRLMG. Residues 410-430 traverse the membrane as a helical segment; the sequence is FIMGAWFLTSAASSVIAGWVA. Residues 431–451 are Cytoplasmic-facing; the sequence is GLTAAPDNVTNPLATLEIYSR. Residues 452-472 form a helical membrane-spanning segment; that stretch reads VFTQIGVVTGVIAVVTIIIAP. The Periplasmic segment spans residues 473–495; that stretch reads WLHRMTLDEKPAHPEHEMALDAR.

The protein belongs to the major facilitator superfamily. Proton-dependent oligopeptide transporter (POT/PTR) (TC 2.A.17) family. DtpA subfamily.

The protein localises to the cell inner membrane. In terms of biological role, proton-dependent permease that transports di- and tripeptides. This chain is Dipeptide and tripeptide permease A, found in Chromobacterium violaceum (strain ATCC 12472 / DSM 30191 / JCM 1249 / CCUG 213 / NBRC 12614 / NCIMB 9131 / NCTC 9757 / MK).